Here is a 241-residue protein sequence, read N- to C-terminus: MADNKANKEQVHRVFQNISKKYDRLNNIISFEQHKVWRKRVMKDMGVRKGTKALDVCCGTGDWTIALSKAVGPTGEVTGIDFSENMLEVGKEKTASMENVKLVHGDAMELPFEDNSFDYVTIGFGLRNVPDYLVALKEMNRVLKPGGMVVCLETSQPTLPVFKQMYALYFKFVMPIFGKLFAKSKEEYEWLQQSTFNFPGKEELKRMFEEAGFINVRVRSFTGGVAAMHLGYKEKDNTKGD.

Residues Thr-60, Asp-81, and 106–107 (DA) each bind S-adenosyl-L-methionine.

This sequence belongs to the class I-like SAM-binding methyltransferase superfamily. MenG/UbiE family.

The enzyme catalyses a 2-demethylmenaquinol + S-adenosyl-L-methionine = a menaquinol + S-adenosyl-L-homocysteine + H(+). Its pathway is quinol/quinone metabolism; menaquinone biosynthesis; menaquinol from 1,4-dihydroxy-2-naphthoate: step 2/2. Functionally, methyltransferase required for the conversion of demethylmenaquinol (DMKH2) to menaquinol (MKH2). This Staphylococcus aureus (strain Mu3 / ATCC 700698) protein is Demethylmenaquinone methyltransferase.